The chain runs to 522 residues: MAVNKGLTLLDGDLPEQENVLQRVLQLPVVSGTCECFQKTYTSTKEAHPLVASVCNAYEKGVQSASSLAAWSMEPVVRRLSTQFTAANELACRGLDHLEEKIPALQYPPEKIASELKDTISTRLRSARNSISVPIASTSDKVLGAALAGCELAWGVARDTAEFAANTRAGRLASGGADLALGSIEKVVEYLLPPDKEESAPAPGHQQAQKSPKAKPSLLSRVGALTNTLSRYTVQTMARALEQGHTVAMWIPGVVPLSSLAQWGASVAMQAVSRRRSEVRVPWLHSLAAAQEEDHEDQTDTEGEDTEEEEELETEENKFSEVAALPGPRGLLGGVAHTLQKTLQTTISAVTWAPAAVLGMAGRVLHLTPAPAVSSTKGRAMSLSDALKGVTDNVVDTVVHYVPLPRLSLMEPESEFRDIDNPPAEVERREAERRASGAPSAGPEPAPRLAQPRRSLRSAQSPGAPPGPGLEDEVATPAAPRPGFPAVPREKPKRRVSDSFFRPSVMEPILGRTHYSQLRKKS.

At S81 the chain carries Phosphoserine. T85 is subject to Phosphothreonine. Residues S126, S130, S132, S137, and S174 each carry the phosphoserine modification. Disordered regions lie at residues 195–217 (DKEESAPAPGHQQAQKSPKAKPS) and 287–318 (LAAAQEEDHEDQTDTEGEDTEEEEELETEENK). Over residues 291–314 (QEEDHEDQTDTEGEDTEEEEELET) the composition is skewed to acidic residues. Residues 291–319 (QEEDHEDQTDTEGEDTEEEEELETEENKF) are required for interaction with CIDEC. A phosphothreonine mark is found at T299 and T301. 3 positions are modified to phosphoserine: S382, S384, and S408. Positions 413-522 (ESEFRDIDNP…THYSQLRKKS (110 aa)) are disordered. Residues 414–435 (SEFRDIDNPPAEVERREAERRA) show a composition bias toward basic and acidic residues. 3 positions are modified to phosphoserine: S436, S497, and S499.

Belongs to the perilipin family. Interacts with ABHD5. Interacts with CIDEC. Interacts with AQP7. Major cAMP-dependent protein kinase-substrate in adipocytes, also dephosphorylated by PP1. When phosphorylated, may be maximally sensitive to HSL and when unphosphorylated, may play a role in the inhibition of lipolysis, by acting as a barrier in lipid droplet. Detected in adipocytes from white adipose tissue (at protein level). Detected in visceral adipose tissue and mammary gland.

The protein resides in the endoplasmic reticulum. The protein localises to the lipid droplet. In terms of biological role, modulator of adipocyte lipid metabolism. Coats lipid storage droplets to protect them from breakdown by hormone-sensitive lipase (HSL). Its absence may result in leanness. Plays a role in unilocular lipid droplet formation by activating CIDEC. Their interaction promotes lipid droplet enlargement and directional net neutral lipid transfer. May modulate lipolysis and triglyceride levels. This Homo sapiens (Human) protein is Perilipin-1 (PLIN1).